Reading from the N-terminus, the 514-residue chain is Maturase K (514 aa).

Belongs to the intron maturase 2 family. MatK subfamily.

The protein localises to the plastid. The protein resides in the chloroplast. Its function is as follows. Usually encoded in the trnK tRNA gene intron. Probably assists in splicing its own and other chloroplast group II introns. The polypeptide is Maturase K (Phoenix dactylifera (Date palm)).